A 650-amino-acid chain; its full sequence is 1-deoxy-D-xylulose-5-phosphate synthase (650 aa).

Thiamine diphosphate contacts are provided by residues His73 and 113–115 (SHA). Asp145 is a binding site for Mg(2+). Residues 146–147 (GA), Asn175, Tyr287, and Glu369 contribute to the thiamine diphosphate site. Mg(2+) is bound at residue Asn175.

This sequence belongs to the transketolase family. DXPS subfamily. Homodimer. Mg(2+) serves as cofactor. The cofactor is thiamine diphosphate.

The catalysed reaction is D-glyceraldehyde 3-phosphate + pyruvate + H(+) = 1-deoxy-D-xylulose 5-phosphate + CO2. It participates in metabolic intermediate biosynthesis; 1-deoxy-D-xylulose 5-phosphate biosynthesis; 1-deoxy-D-xylulose 5-phosphate from D-glyceraldehyde 3-phosphate and pyruvate: step 1/1. Catalyzes the acyloin condensation reaction between C atoms 2 and 3 of pyruvate and glyceraldehyde 3-phosphate to yield 1-deoxy-D-xylulose-5-phosphate (DXP). The chain is 1-deoxy-D-xylulose-5-phosphate synthase from Leifsonia xyli subsp. xyli (strain CTCB07).